A 202-amino-acid polypeptide reads, in one-letter code: Holliday junction resolvase RecU (202 aa).

Threonine 85, aspartate 87, glutamate 100, and glutamine 119 together coordinate Mg(2+).

The protein belongs to the RecU family. Mg(2+) is required as a cofactor.

Its subcellular location is the cytoplasm. It catalyses the reaction Endonucleolytic cleavage at a junction such as a reciprocal single-stranded crossover between two homologous DNA duplexes (Holliday junction).. Its function is as follows. Endonuclease that resolves Holliday junction intermediates in genetic recombination. Cleaves mobile four-strand junctions by introducing symmetrical nicks in paired strands. Promotes annealing of linear ssDNA with homologous dsDNA. Required for DNA repair, homologous recombination and chromosome segregation. This chain is Holliday junction resolvase RecU, found in Streptococcus pyogenes serotype M6 (strain ATCC BAA-946 / MGAS10394).